The following is a 458-amino-acid chain: ATP synthase subunit beta (458 aa).

148 to 155 is an ATP binding site; the sequence is GGAGVGKT.

The protein belongs to the ATPase alpha/beta chains family. F-type ATPases have 2 components, CF(1) - the catalytic core - and CF(0) - the membrane proton channel. CF(1) has five subunits: alpha(3), beta(3), gamma(1), delta(1), epsilon(1). CF(0) has three main subunits: a(1), b(2) and c(9-12). The alpha and beta chains form an alternating ring which encloses part of the gamma chain. CF(1) is attached to CF(0) by a central stalk formed by the gamma and epsilon chains, while a peripheral stalk is formed by the delta and b chains.

Its subcellular location is the cell inner membrane. The catalysed reaction is ATP + H2O + 4 H(+)(in) = ADP + phosphate + 5 H(+)(out). Functionally, produces ATP from ADP in the presence of a proton gradient across the membrane. The catalytic sites are hosted primarily by the beta subunits. This Legionella pneumophila (strain Paris) protein is ATP synthase subunit beta.